The following is a 221-amino-acid chain: MDNFTVGVVVFPGSNCDRDVSWALEGCLDIRTKYLWHESSDLSDVDAIVLPGGFSYGDYLRCGAIARFSPLINALDEFVKSGKRVLGICNGFQILTESGFLPGALVANKNLNFICDDVELDIVSTKGGWFNNGDEKQTIKLPIAHGEGRYHCDSDTLKKLVDNELIALRYKNNPNGSSFDIAGITNEKGNVLGLMPHPERACDETIGGTDGLFTLKSLILK.

The Glutamine amidotransferase type-1 domain maps to 6–221; the sequence is VGVVVFPGSN…LFTLKSLILK (216 aa). The active-site Nucleophile is C89. Catalysis depends on residues H197 and E199.

In terms of assembly, part of the FGAM synthase complex composed of 1 PurL, 1 PurQ and 2 PurS subunits.

It is found in the cytoplasm. The catalysed reaction is N(2)-formyl-N(1)-(5-phospho-beta-D-ribosyl)glycinamide + L-glutamine + ATP + H2O = 2-formamido-N(1)-(5-O-phospho-beta-D-ribosyl)acetamidine + L-glutamate + ADP + phosphate + H(+). It carries out the reaction L-glutamine + H2O = L-glutamate + NH4(+). It functions in the pathway purine metabolism; IMP biosynthesis via de novo pathway; 5-amino-1-(5-phospho-D-ribosyl)imidazole from N(2)-formyl-N(1)-(5-phospho-D-ribosyl)glycinamide: step 1/2. Part of the phosphoribosylformylglycinamidine synthase complex involved in the purines biosynthetic pathway. Catalyzes the ATP-dependent conversion of formylglycinamide ribonucleotide (FGAR) and glutamine to yield formylglycinamidine ribonucleotide (FGAM) and glutamate. The FGAM synthase complex is composed of three subunits. PurQ produces an ammonia molecule by converting glutamine to glutamate. PurL transfers the ammonia molecule to FGAR to form FGAM in an ATP-dependent manner. PurS interacts with PurQ and PurL and is thought to assist in the transfer of the ammonia molecule from PurQ to PurL. This Prochlorococcus marinus (strain MIT 9312) protein is Phosphoribosylformylglycinamidine synthase subunit PurQ.